A 317-amino-acid chain; its full sequence is 1-phosphofructokinase (317 aa).

ATP-binding positions include 223–228 (SMGAEG) and 254–255 (GD). Asp255 acts as the Proton acceptor in catalysis.

Belongs to the carbohydrate kinase PfkB family.

It carries out the reaction beta-D-fructose 1-phosphate + ATP = beta-D-fructose 1,6-bisphosphate + ADP + H(+). Its function is as follows. Catalyzes the ATP-dependent phosphorylation of fructose-l-phosphate to fructose-l,6-bisphosphate. This Vibrio cholerae serotype O1 (strain ATCC 39315 / El Tor Inaba N16961) protein is 1-phosphofructokinase.